Reading from the N-terminus, the 285-residue chain is Ribonuclease Z (285 aa).

Zn(2+) is bound by residues H61, H63, D65, H66, H152, D175, and H239. D65 acts as the Proton acceptor in catalysis.

This sequence belongs to the RNase Z family. In terms of assembly, homodimer. Zn(2+) is required as a cofactor.

It carries out the reaction Endonucleolytic cleavage of RNA, removing extra 3' nucleotides from tRNA precursor, generating 3' termini of tRNAs. A 3'-hydroxy group is left at the tRNA terminus and a 5'-phosphoryl group is left at the trailer molecule.. Its function is as follows. Zinc phosphodiesterase, which displays some tRNA 3'-processing endonuclease activity. Probably involved in tRNA maturation, by removing a 3'-trailer from precursor tRNA. This is Ribonuclease Z from Mycobacterium sp. (strain JLS).